Reading from the N-terminus, the 107-residue chain is UPF0060 membrane protein RPD_3084 (107 aa).

4 consecutive transmembrane segments (helical) span residues 5–25, 31–51, 59–79, and 85–105; these read IIYVCAALAEIAGCFAFWGWL, VWWLLPGMLSLAAFAYLLTLV, AYASYGGIYIVASLVWLWSVE, and RWDVTGGCVCLIGAAIILWGP.

It belongs to the UPF0060 family.

Its subcellular location is the cell inner membrane. This Rhodopseudomonas palustris (strain BisB5) protein is UPF0060 membrane protein RPD_3084.